The primary structure comprises 887 residues: Probable LRR receptor-like serine/threonine-protein kinase At5g59680 (887 aa).

Residues 1–23 form the signal peptide; that stretch reads MERSLELLLLLIRTLAIIHISQA. The Extracellular portion of the chain corresponds to 25–510; that stretch reads SQQGFISLDC…TKSGKSFPVT (486 aa). 12 N-linked (GlcNAc...) asparagine glycosylation sites follow: Asn143, Asn230, Asn256, Asn289, Asn338, Asn363, Asn400, Asn416, Asn432, Asn445, Asn464, and Asn471. 3 LRR repeats span residues 411–434, 435–457, and 459–481; these read RITT…QNLT, TLEK…LSNM, and SLLV…LQRK. Residues 511–531 form a helical membrane-spanning segment; sequence IVASVGSAAILIVVLVLVLFL. At 532 to 887 the chain is on the cytoplasmic side; the sequence is RKKKPSAVEV…FDAEMIPRAR (356 aa). Phosphothreonine is present on Thr571. Residues 580 to 853 form the Protein kinase domain; the sequence is NNFGRVVGEG…HVVIELKECL (274 aa). ATP contacts are provided by residues 586–594 and Lys608; that span reads VGEGGFGVV. Position 653 is a phosphotyrosine (Tyr653). Asp705 (proton acceptor) is an active-site residue. Residue Ser739 is modified to Phosphoserine. Residues Thr740 and Thr745 each carry the phosphothreonine modification. Position 753 is a phosphotyrosine (Tyr753).

The protein belongs to the protein kinase superfamily. Ser/Thr protein kinase family.

It is found in the membrane. It catalyses the reaction L-seryl-[protein] + ATP = O-phospho-L-seryl-[protein] + ADP + H(+). It carries out the reaction L-threonyl-[protein] + ATP = O-phospho-L-threonyl-[protein] + ADP + H(+). This chain is Probable LRR receptor-like serine/threonine-protein kinase At5g59680, found in Arabidopsis thaliana (Mouse-ear cress).